The chain runs to 225 residues: Transcription factor MYB1 (225 aa).

HTH myb-type domains follow at residues 11-67 and 68-118; these read LGRV…KPSI and KRGH…YKKH. DNA-binding regions (H-T-H motif) lie at residues 39-63 and 91-114; these read WKRV…LNYL and WSLI…NTHL.

In terms of assembly, no interactions with bHLH.

The protein resides in the nucleus. Activates DODA1 and CYP76AD1 in the betalain red pigment pathway. This is Transcription factor MYB1 from Beta vulgaris (Sugar beet).